The sequence spans 2025 residues: E3 ubiquitin-protein ligase TRIP12 (2025 aa).

The span at 1–10 shows a compositional bias: polar residues; it reads MSNRPNNNPG. The segment at 1–404 is disordered; the sequence is MSNRPNNNPG…SGESESDDSE (404 aa). N-acetylserine is present on S2. S12 bears the Phosphoserine mark. Positions 18-27 are enriched in polar residues; that stretch reads RNTAGAQPQD. Residues 48–70 show a composition bias toward basic and acidic residues; it reads DPDRANTSERQKTGQVPKKDNSR. Phosphoserine occurs at positions 77, 85, and 100. 3 stretches are compositionally biased toward polar residues: residues 78 to 88, 99 to 108, and 119 to 132; these read PDYNRTNSPSS, ESLSETNKPP, and EQQL…STSK. 2 stretches are compositionally biased toward low complexity: residues 154-166 and 175-216; these read SSCV…SEST and PTKL…SSTV. An N6-acetyllysine modification is found at K181. Positions 280 to 290 are enriched in polar residues; it reads PGSSKSETSKP. S310 and S312 each carry phosphoserine. The span at 326 to 338 shows a compositional bias: polar residues; it reads QKTTGSCASTSRR. Residues 346-358 are compositionally biased toward basic and acidic residues; it reads GAAEARRQEKMAD. A compositionally biased stretch (polar residues) spans 362–371; it reads NQETVNSSAA. Residues 379–397 are compositionally biased toward low complexity; sequence GAAASSSVAGAVGMTTSGE. Residues 755–869 enclose the WWE domain; the sequence is MLKKGNAQNT…DPELAKSFIK (115 aa). The tract at residues 970–1077 is disordered; it reads ESLLTSPPKA…QSPKSSFLAS (108 aa). S975 is subject to Phosphoserine. The span at 983 to 1006 shows a compositional bias: low complexity; it reads GSGSLGSTTPASSGTATAATNASA. S1024 and S1030 each carry phosphoserine. A compositionally biased stretch (basic residues) spans 1034 to 1047; it reads KRKRLPKRGPRRPK. S1049 carries the post-translational modification Phosphoserine. Residues 1050–1059 show a composition bias toward basic and acidic residues; the sequence is PPRDDDKVDN. A compositionally biased stretch (low complexity) spans 1062-1073; sequence KSPTTTQSPKSS. Residues S1063, S1350, S1355, S1362, and S1409 each carry the phosphoserine modification. Position 1410 is a phosphothreonine (T1410). Disordered regions lie at residues 1440 to 1466 and 1601 to 1620; these read SSKD…NAKK and TNPE…PRLD. The residue at position 1458 (K1458) is an N6-acetyllysine. A Phosphoserine modification is found at S1460. The segment at 1529–1603 is K-box; sequence EIIPTSEFIN…AMQRLLDTNP (75 aa). The HECT domain occupies 1918–2025; that stretch reads PDHGYTHDSR…REGQQSFHLS (108 aa). Residue C1992 is the Glycyl thioester intermediate of the active site.

It belongs to the UPL family. K-HECT subfamily. Interacts with MYC; leading to disrupt interaction with isoform p19ARF/ARF of CDKN2A. Interacts with TRADD; leading to disrupt interaction with isoform p19ARF/ARF of CDKN2A. Interacts with SMARCC1; leading to disrupt interaction with SMARCE1.

Its subcellular location is the nucleus. The protein resides in the nucleoplasm. The enzyme catalyses S-ubiquitinyl-[E2 ubiquitin-conjugating enzyme]-L-cysteine + [acceptor protein]-L-lysine = [E2 ubiquitin-conjugating enzyme]-L-cysteine + N(6)-ubiquitinyl-[acceptor protein]-L-lysine.. It participates in protein modification; protein ubiquitination. E3 ubiquitin-protein ligase involved in ubiquitin fusion degradation (UFD) pathway and regulation of DNA repair. Part of the ubiquitin fusion degradation (UFD) pathway, a process that mediates ubiquitination of protein at their N-terminus, regardless of the presence of lysine residues in target proteins. Acts as a key regulator of DNA damage response by acting as a suppressor of RNF168, an E3 ubiquitin-protein ligase that promotes accumulation of 'Lys-63'-linked histone H2A and H2AX at DNA damage sites, thereby acting as a guard against excessive spreading of ubiquitinated chromatin at damaged chromosomes. In normal cells, mediates ubiquitination and degradation of isoform p19ARF/ARF of CDKN2A, a lysine-less tumor suppressor required for p53/TP53 activation under oncogenic stress. In cancer cells, however, isoform p19ARF/ARF and TRIP12 are located in different cell compartments, preventing isoform p19ARF/ARF ubiquitination and degradation. Does not mediate ubiquitination of isoform p16-INK4a of CDKN2A. Also catalyzes ubiquitination of NAE1 and SMARCE1, leading to their degradation. Ubiquitination and degradation of target proteins is regulated by interaction with proteins such as MYC, TRADD or SMARCC1, which disrupt the interaction between TRIP12 and target proteins. Mediates ubiquitination of ASXL1: following binding to N(6)-methyladenosine methylated DNA, ASXL1 is ubiquitinated by TRIP12, leading to its degradation and subsequent inactivation of the PR-DUB complex. The sequence is that of E3 ubiquitin-protein ligase TRIP12 (Trip12) from Rattus norvegicus (Rat).